The sequence spans 304 residues: Ribonuclease Z (304 aa).

7 residues coordinate Zn(2+): histidine 63, histidine 65, aspartate 67, histidine 68, histidine 143, aspartate 213, and histidine 271. Aspartate 67 (proton acceptor) is an active-site residue.

Belongs to the RNase Z family. Homodimer. The cofactor is Zn(2+).

It carries out the reaction Endonucleolytic cleavage of RNA, removing extra 3' nucleotides from tRNA precursor, generating 3' termini of tRNAs. A 3'-hydroxy group is left at the tRNA terminus and a 5'-phosphoryl group is left at the trailer molecule.. In terms of biological role, zinc phosphodiesterase, which displays some tRNA 3'-processing endonuclease activity. Probably involved in tRNA maturation, by removing a 3'-trailer from precursor tRNA. The sequence is that of Ribonuclease Z from Porphyromonas gingivalis (strain ATCC BAA-308 / W83).